The chain runs to 281 residues: Putative pyruvate, phosphate dikinase regulatory protein (281 aa).

150–157 serves as a coordination point for ADP; sequence GVSRTSKT.

It belongs to the pyruvate, phosphate/water dikinase regulatory protein family. PDRP subfamily.

It carries out the reaction N(tele)-phospho-L-histidyl/L-threonyl-[pyruvate, phosphate dikinase] + ADP = N(tele)-phospho-L-histidyl/O-phospho-L-threonyl-[pyruvate, phosphate dikinase] + AMP + H(+). The enzyme catalyses N(tele)-phospho-L-histidyl/O-phospho-L-threonyl-[pyruvate, phosphate dikinase] + phosphate + H(+) = N(tele)-phospho-L-histidyl/L-threonyl-[pyruvate, phosphate dikinase] + diphosphate. Its function is as follows. Bifunctional serine/threonine kinase and phosphorylase involved in the regulation of the pyruvate, phosphate dikinase (PPDK) by catalyzing its phosphorylation/dephosphorylation. In Sorangium cellulosum (strain So ce56) (Polyangium cellulosum (strain So ce56)), this protein is Putative pyruvate, phosphate dikinase regulatory protein.